The primary structure comprises 472 residues: MAGGEAGVTLGQPHLSRQDLATLDVTKLTPLSHEVISRQATINIGTIGHVAHGKSTVVKAISGVHTVRFKNELERNITIKLGYANAKIYKLDDPSCPRPECYRSCGSSTPDEFPTDIPGTKGNFKLVRHVSFVDCPGHDILMATMLNGAAVMDAALLLIAGNESCPQPQTSEHLAAIEIMKLKHILILQNKIDLVKESQAKEQYEQILAFVQGTVAEGAPIIPISAQLKYNIEVVCEYIVKKIPVPPRDFTSEPRLIVIRSFDVNKPGCEVDDLKGGVAGGSILKGVLKVGQEIEVRPGIVSKDSEGKLMCKPIFSKIVSLFAEHNDLQYAAPGGLIGVGTKIDPTLCRADRMVGQVLGAVGALPEIFTELEISYFLLRRLLGVRTEGDKKAAKVQKLSKNEVLMVNIGSLSTGGRVSAVKADLGKIVLTNPVCTEVGEKIALSRRVEKHWRLIGWGQIRRGVTIKPTVDDD.

Alanine 2 carries the post-translational modification N-acetylalanine. Position 16 is a phosphoserine (serine 16). The 210-residue stretch at glutamine 39–arginine 248 folds into the tr-type G domain. The segment at glycine 48–serine 55 is G1. Alanine 51–threonine 56 serves as a coordination point for GTP. The interval asparagine 76–lysine 80 is G2. The tract at residues aspartate 134–glycine 137 is G3. Residues asparagine 190–aspartate 193 and serine 225–glutamine 227 each bind GTP. The G4 stretch occupies residues asparagine 190–aspartate 193. Residues serine 225–glutamine 227 are G5. Residues glycine 457–valine 469 are interacts with Cdc123.

Belongs to the TRAFAC class translation factor GTPase superfamily. Classic translation factor GTPase family. EIF2G subfamily. As to quaternary structure, eukaryotic translation initiation factor 2 eIF2 is a heterotrimeric complex composed of an alpha (EIF2S1), a beta (EIF2S2) and a gamma (EIF2S3) chain. eIF2 is member of the 43S pre-initiation complex (43S PIC). Interacts (via C-terminus) with CDC123; the interaction is direct. Widely expressed.

It localises to the cytoplasm. It is found in the cytosol. It catalyses the reaction GTP + H2O = GDP + phosphate + H(+). In terms of biological role, member of the eIF2 complex that functions in the early steps of protein synthesis by forming a ternary complex with GTP and initiator tRNA. This complex binds to a 40S ribosomal subunit, followed by mRNA binding to form the 43S pre-initiation complex (43S PIC). Junction of the 60S ribosomal subunit to form the 80S initiation complex is preceded by hydrolysis of the GTP bound to eIF2 and release of an eIF2-GDP binary complex. In order for eIF2 to recycle and catalyze another round of initiation, the GDP bound to eIF2 must exchange with GTP by way of a reaction catalyzed by eIF-2B. Along with its paralog on chromosome Y, may contribute to spermatogenesis up to the round spermatid stage. This is Eukaryotic translation initiation factor 2 subunit 3, X-linked (Eif2s3) from Rattus norvegicus (Rat).